The chain runs to 148 residues: uncharacterized protein (148 aa).

Positions 55-148 (KMRCGESGAG…RNQGQLYPQP (94 aa)) are disordered. Residues 68–104 (RSNSAEVSSSQPALASKSQSKWGPTSNNPRGALTTTE) show a composition bias toward polar residues.

This is an uncharacterized protein from Homo sapiens (Human).